The following is a 495-amino-acid chain: UDP-N-acetylmuramoyl-L-alanyl-D-glutamate--2,6-diaminopimelate ligase (495 aa).

S29 lines the UDP-N-acetyl-alpha-D-muramoyl-L-alanyl-D-glutamate pocket. 111 to 117 (GTNGKTS) is an ATP binding site. Residues 153–154 (TT), S180, Q186, and R188 contribute to the UDP-N-acetyl-alpha-D-muramoyl-L-alanyl-D-glutamate site. At K220 the chain carries N6-carboxylysine. Meso-2,6-diaminopimelate contacts are provided by residues R384, 408–411 (DNPR), G459, and E463. Residues 408–411 (DNPR) carry the Meso-diaminopimelate recognition motif motif.

It belongs to the MurCDEF family. MurE subfamily. Mg(2+) is required as a cofactor. Carboxylation is probably crucial for Mg(2+) binding and, consequently, for the gamma-phosphate positioning of ATP.

It localises to the cytoplasm. The enzyme catalyses UDP-N-acetyl-alpha-D-muramoyl-L-alanyl-D-glutamate + meso-2,6-diaminopimelate + ATP = UDP-N-acetyl-alpha-D-muramoyl-L-alanyl-gamma-D-glutamyl-meso-2,6-diaminopimelate + ADP + phosphate + H(+). It participates in cell wall biogenesis; peptidoglycan biosynthesis. Catalyzes the addition of meso-diaminopimelic acid to the nucleotide precursor UDP-N-acetylmuramoyl-L-alanyl-D-glutamate (UMAG) in the biosynthesis of bacterial cell-wall peptidoglycan. The chain is UDP-N-acetylmuramoyl-L-alanyl-D-glutamate--2,6-diaminopimelate ligase from Xanthomonas campestris pv. campestris (strain 8004).